We begin with the raw amino-acid sequence, 620 residues long: Chaperone protein HscA homolog (620 aa).

The protein belongs to the heat shock protein 70 family.

Functionally, chaperone involved in the maturation of iron-sulfur cluster-containing proteins. Has a low intrinsic ATPase activity which is markedly stimulated by HscB. This Shewanella piezotolerans (strain WP3 / JCM 13877) protein is Chaperone protein HscA homolog.